The primary structure comprises 275 residues: Increased recombination centers protein 6 (275 aa).

This sequence belongs to the IRC6 family.

In terms of biological role, involved in gross chromosomal rearrangements (GCRs) and telomere healing. The polypeptide is Increased recombination centers protein 6 (IRC6) (Candida dubliniensis (strain CD36 / ATCC MYA-646 / CBS 7987 / NCPF 3949 / NRRL Y-17841) (Yeast)).